Here is a 355-residue protein sequence, read N- to C-terminus: Chemerin-like receptor 2 (355 aa).

Residues 1–41 (MEDLEETLFEEFENYSYALDYYSLESDLEEKVQLGVVHWVS) are Extracellular-facing. N14 is a glycosylation site (N-linked (GlcNAc...) asparagine). Residues 42–62 (LVLYCLSFVLGIPGNAIVIWF) form a helical membrane-spanning segment. Over 63 to 73 (TGFKWKRTVST) the chain is Cytoplasmic. Residues 74-94 (LWFLNLAIADFIFLLFLPLYI) form a helical membrane-spanning segment. Residues 95–112 (SYVVMNFHWPFGIWLCKA) lie on the Extracellular side of the membrane. C110 and C187 are disulfide-bonded. A helical membrane pass occupies residues 113–133 (NSFTAQLNMFASVFFLTVISL). The Cytoplasmic portion of the chain corresponds to 134–154 (DHYIHLIHPVLSHRHRTLKNS). A helical membrane pass occupies residues 155–175 (LIVIIFIWLLASLIGGPALYF). At 176–210 (RDTVEFNNHTLCYNNFQKHDPDLTVIRHHVLTWVK) the chain is on the extracellular side. The chain crosses the membrane as a helical span at residues 211 to 231 (YIVGYLFPLLTMSICYLCLIL). The Cytoplasmic segment spans residues 232–247 (KVKKRSILISSRHFWT). The chain crosses the membrane as a helical span at residues 248 to 268 (ILAVVVAFVVCWTPYHLFSIW). At 269–286 (ELTIHHNSYSHHVMQAGI) the chain is on the extracellular side. Residues 287–307 (PLSTGLAFLNSCLNPILYVLI) traverse the membrane as a helical segment. Residues 308 to 355 (SKKFQARFRSSVAEILKYTLWEVSCSGTVSEQLRNSETKNLCLLETAQ) lie on the Cytoplasmic side of the membrane.

This sequence belongs to the chemokine-like receptor (CMKLR) family.

The protein localises to the cell membrane. In terms of biological role, receptor for chemoattractant adipokine chemerin/RARRES2 suggesting a role for this receptor in the regulation of inflammation and energy homesotasis. Signals mainly via beta-arrestin pathway. Binding of RARRES2 activates weakly G proteins, calcium mobilization and MAPK1/MAPK3 (ERK1/2) phosphorylation too. Acts also as a receptor for TAFA1, mediates its effects on neuronal stem-cell proliferation and differentiation via the activation of ROCK/ERK and ROCK/STAT3 signaling pathway. This chain is Chemerin-like receptor 2 (CMKLR2), found in Macaca fascicularis (Crab-eating macaque).